The primary structure comprises 87 residues: Large ribosomal subunit protein bL31B (87 aa).

This sequence belongs to the bacterial ribosomal protein bL31 family. Type B subfamily. In terms of assembly, part of the 50S ribosomal subunit.

The chain is Large ribosomal subunit protein bL31B from Shigella boydii serotype 4 (strain Sb227).